A 55-amino-acid polypeptide reads, in one-letter code: Large ribosomal subunit protein bL33 (55 aa).

Belongs to the bacterial ribosomal protein bL33 family.

This chain is Large ribosomal subunit protein bL33, found in Vibrio atlanticus (strain LGP32) (Vibrio splendidus (strain Mel32)).